The sequence spans 211 residues: Uracil phosphoribosyltransferase (211 aa).

Residues Arg77, Arg102, and 129–137 (DPMLATGGS) each bind 5-phospho-alpha-D-ribose 1-diphosphate. Uracil is bound by residues Ile192 and 197-199 (GDA). Asp198 lines the 5-phospho-alpha-D-ribose 1-diphosphate pocket.

The protein belongs to the UPRTase family. It depends on Mg(2+) as a cofactor.

It carries out the reaction UMP + diphosphate = 5-phospho-alpha-D-ribose 1-diphosphate + uracil. It participates in pyrimidine metabolism; UMP biosynthesis via salvage pathway; UMP from uracil: step 1/1. Its activity is regulated as follows. Allosterically activated by GTP. Catalyzes the conversion of uracil and 5-phospho-alpha-D-ribose 1-diphosphate (PRPP) to UMP and diphosphate. This Corynebacterium aurimucosum (strain ATCC 700975 / DSM 44827 / CIP 107346 / CN-1) (Corynebacterium nigricans) protein is Uracil phosphoribosyltransferase.